Consider the following 37-residue polypeptide: Large ribosomal subunit protein bL36 (37 aa).

It belongs to the bacterial ribosomal protein bL36 family.

In Acidovorax ebreus (strain TPSY) (Diaphorobacter sp. (strain TPSY)), this protein is Large ribosomal subunit protein bL36.